Reading from the N-terminus, the 280-residue chain is Divalent cation/proton antiporter GDT1 (280 aa).

At 1–3 (MGN) the chain is on the cytoplasmic side. A helical membrane pass occupies residues 4-24 (MIKKASLIALLPLFTAAAAAA). Residues 25–45 (TDAETSMESGSSSHLKSFLMS) lie on the Vacuolar side of the membrane. The helical transmembrane segment at 46–66 (VSMIGLSEIGDKTFLIAALMA) threads the bilayer. Over 67 to 71 (MRHKR) the chain is Cytoplasmic. Residues 72–92 (VLVFSAAATSLAIMTILSGVV) form a helical membrane-spanning segment. Residues 93–104 (GHSAVAFLSERY) lie on the Vacuolar side of the membrane. Residues 105–125 (TAFFAGILFLVFGYKLTMEGL) form a helical membrane-spanning segment. The Cytoplasmic segment spans residues 126–183 (EMSKDAGVEEEMAEVEEEIAIKDMNQDMDDVEKGGDTAYDKQLKNASIGKKIVHRIRE). A helical membrane pass occupies residues 184–204 (LASFMFSPVWVQIFLMVFLGE). Topologically, residues 205–222 (LGDRSQISIIAMATDSDY) are vacuolar. Residues 223–243 (WYVIAGAVIGHAICSGLAVVG) traverse the membrane as a helical segment. The Cytoplasmic segment spans residues 244 to 255 (GKLLATRISIRT). Residues 256–276 (ITLASSLLFFIFALMYIYQAF) traverse the membrane as a helical segment. Residues 277–280 (TTQD) lie on the Vacuolar side of the membrane.

The protein belongs to the GDT1 family.

The protein localises to the golgi apparatus. Its subcellular location is the cis-Golgi network membrane. The catalysed reaction is Ca(2+)(in) + n H(+)(out) = Ca(2+)(out) + n H(+)(in). It catalyses the reaction Mn(2+)(in) + n H(+)(out) = Mn(2+)(out) + n H(+)(in). Its function is as follows. Divalent cation:proton antiporter that exchanges calcium or manganese ions for protons across the Golgi membrane. Mediates the reversible transport of calcium or manganese to the Golgi lumen driven by the proton gradient and possibly the membrane potential generated by V-ATPase. Provides calcium or manganese cofactors to resident Golgi enzymes and contributes to the maintenance of an acidic luminal Golgi pH required for proper functioning of the secretory pathway. The transport stoichiometry remains to be elucidated. The chain is Divalent cation/proton antiporter GDT1 from Saccharomyces cerevisiae (strain ATCC 204508 / S288c) (Baker's yeast).